The following is a 74-amino-acid chain: Large ribosomal subunit protein bL31 (74 aa).

The Zn(2+) site is built by Cys16, Cys18, Cys38, and Cys41.

This sequence belongs to the bacterial ribosomal protein bL31 family. Type A subfamily. Part of the 50S ribosomal subunit. It depends on Zn(2+) as a cofactor.

Binds the 23S rRNA. This is Large ribosomal subunit protein bL31 (rpmE) from Streptomyces coelicolor (strain ATCC BAA-471 / A3(2) / M145).